Consider the following 986-residue polypeptide: Rho guanine nucleotide exchange factor 2 (986 aa).

The Phorbol-ester/DAG-type zinc-finger motif lies at 39–86 (GHLFTTISVSGMTMCYACNKSITAKEALICPTCNVTIHNRCKDTLANC). Phosphoserine is present on residues Ser109, Ser122, Ser129, Ser133, and Ser137. Residues 131–161 (RQSLLGSRRGRSSLSLAKSVSTTNIAGHFND) are interaction with DYNLT1. Ser143 bears the Phosphoserine; by PAK4 mark. Phosphoserine occurs at positions 151, 163, 172, 174, and 177. A DH domain is found at 235–432 (KQQDVIYELI…KELLSNVDEG (198 aa)). The residue at position 353 (Lys353) is an N6-acetyllysine. The 100-residue stretch at 472–571 (KLIHDGCLLW…WIRVIQQSVR (100 aa)) folds into the PH domain. Positions 587–611 (EAYLRRIKMELQQKDRALVELLREK) form a coiled coil. 2 positions are modified to phosphoserine: Ser645 and Ser648. Thr679 carries the post-translational modification Phosphothreonine; by MAPK1 or MAPK3. The tract at residues 683–705 (PALPLEPDSGGNTSPGVTANGEA) is disordered. Phosphoserine is present on residues Ser691, Ser696, Ser711, and Ser782. Residues 798–867 (EKQATELALL…RQLAALGQTE (70 aa)) are a coiled coil. The interval 862-986 (ALGQTEPLPA…RDGEAVASES (125 aa)) is disordered. Ser886 carries the post-translational modification Phosphoserine; by PAK1 and AURKA. The residue at position 894 (Tyr894) is a Phosphotyrosine. Ser896 carries the post-translational modification Phosphoserine; by PAK4. Positions 920-939 (RNFEDRERQELGSPEERLQD) are enriched in basic and acidic residues. A phosphoserine mark is found at Ser932, Ser940, and Ser941. A compositionally biased stretch (acidic residues) spans 941–950 (SDPDTGSEEE). Position 945 is a phosphothreonine (Thr945). A phosphoserine mark is found at Ser947, Ser952, Ser953, Ser956, and Ser960.

Found in a complex composed at least of ARHGEF2, NOD2 and RIPK2. Interacts with RIPK2; the interaction mediates tyrosine phosphorylation of RIPK2 by Src kinase CSK. Interacts with RIPK1 and RIPK3. Interacts with YWHAZ/14-3-3 zeta; when phosphorylated at Ser-886. Interacts with the kinases PAK4, AURKA and MAPK1. Interacts with RHOA and RAC1. Interacts with NOD1. Interacts (via the N-terminal zinc finger) with CAPN6 (via domain II). Interacts with DYNLT1. Post-translationally, phosphorylation of Ser-886 by PAK1 induces binding to protein YWHAZ, promoting its relocation to microtubules and the inhibition of its activity. Phosphorylated by AURKA and CDK1 during mitosis, which negatively regulates its activity. Phosphorylation by MAPK1 or MAPK3 increases nucleotide exchange activity. Phosphorylation by PAK4 releases GEF-H1 from the microtubules. Phosphorylated on serine, threonine and tyrosine residues in a RIPK2-dependent manner.

Its subcellular location is the cytoplasm. The protein resides in the cytoskeleton. It localises to the cell junction. It is found in the tight junction. The protein localises to the golgi apparatus. Its subcellular location is the spindle. The protein resides in the cell projection. It localises to the ruffle membrane. It is found in the cytoplasmic vesicle. In terms of biological role, activates Rho-GTPases by promoting the exchange of GDP for GTP. May be involved in epithelial barrier permeability, cell motility and polarization, dendritic spine morphology, antigen presentation, leukemic cell differentiation, cell cycle regulation, innate immune response, and cancer. Binds Rac-GTPases, but does not seem to promote nucleotide exchange activity toward Rac-GTPases, which was uniquely reported in PubMed:9857026. May stimulate instead the cortical activity of Rac. Inactive toward CDC42, TC10, or Ras-GTPases. Forms an intracellular sensing system along with NOD1 for the detection of microbial effectors during cell invasion by pathogens. Required for RHOA and RIP2 dependent NF-kappaB signaling pathways activation upon S.flexneri cell invasion. Involved not only in sensing peptidoglycan (PGN)-derived muropeptides through NOD1 that is independent of its GEF activity, but also in the activation of NF-kappaB by Shigella effector proteins (IpgB2 and OspB) which requires its GEF activity and the activation of RhoA. Involved in innate immune signaling transduction pathway promoting cytokine IL6/interleukin-6 and TNF-alpha secretion in macrophage upon stimulation by bacterial peptidoglycans; acts as a signaling intermediate between NOD2 receptor and RIPK2 kinase. Contributes to the tyrosine phosphorylation of RIPK2 through Src tyrosine kinase leading to NF-kappaB activation by NOD2. Overexpression activates Rho-, but not Rac-GTPases, and increases paracellular permeability. Involved in neuronal progenitor cell division and differentiation. Involved in the migration of precerebellar neurons. The protein is Rho guanine nucleotide exchange factor 2 (ARHGEF2) of Homo sapiens (Human).